The chain runs to 186 residues: UPF0301 protein HI_0304 (186 aa).

The protein belongs to the UPF0301 (AlgH) family.

The protein is UPF0301 protein HI_0304 of Haemophilus influenzae (strain ATCC 51907 / DSM 11121 / KW20 / Rd).